Consider the following 1245-residue polypeptide: Prospore membrane adapter protein SPO71 (1245 aa).

A disordered region spans residues 207-270; that stretch reads LHEEDQENTN…DFNYNREPSE (64 aa). Over residues 227–247 the composition is skewed to basic and acidic residues; that stretch reads KRKDLGESKSISRKDYSHFDR. Residues 385–399 carry the PxP motif; sequence INILPPWPTELTEEE. The PH domain maps to 1030-1229; sequence LIQKGPLYQK…WVMSIYYELE (200 aa). Residues 1154–1192 are disordered; it reads KKGNEKQYTQDYGRQDNNIDPPSAPEADLNNSNVPSNTD. Composition is skewed to polar residues over residues 1159-1173 and 1182-1191; these read KQYTQDYGRQDNNID and LNNSNVPSNT.

The protein belongs to the SPO71 family. Interacts (via PxP motif) with VPS13 (via SHR-BD domain); during prospore membrane formation.

It is found in the prospore membrane. Recruits the lipid transfer protein VPS13 to the prospore membrane during sporulation, thereby aiding prospore membrane formation. This chain is Prospore membrane adapter protein SPO71 (SPO71), found in Saccharomyces cerevisiae (strain ATCC 204508 / S288c) (Baker's yeast).